Reading from the N-terminus, the 287-residue chain is ATP synthase gamma chain (287 aa).

The protein belongs to the ATPase gamma chain family. F-type ATPases have 2 components, CF(1) - the catalytic core - and CF(0) - the membrane proton channel. CF(1) has five subunits: alpha(3), beta(3), gamma(1), delta(1), epsilon(1). CF(0) has three main subunits: a, b and c.

The protein resides in the cell membrane. Functionally, produces ATP from ADP in the presence of a proton gradient across the membrane. The gamma chain is believed to be important in regulating ATPase activity and the flow of protons through the CF(0) complex. The protein is ATP synthase gamma chain of Mycoplasmopsis agalactiae (strain NCTC 10123 / CIP 59.7 / PG2) (Mycoplasma agalactiae).